The sequence spans 633 residues: Extracellular metalloproteinase 3 (633 aa).

An N-terminal signal peptide occupies residues 1 to 18 (MHGLLLAGLLALPMNVLA). The propeptide occupies 19–246 (HPAEQHASNV…VHNVVDYVAS (228 aa)). The N-linked (GlcNAc...) asparagine glycan is linked to N410. Residue H429 participates in Zn(2+) binding. E430 is an active-site residue. H433 lines the Zn(2+) pocket. N-linked (GlcNAc...) asparagine glycans are attached at residues N480 and N622.

It belongs to the peptidase M36 family. It depends on Zn(2+) as a cofactor.

The protein localises to the secreted. Its function is as follows. Secreted metalloproteinase probably acting as a virulence factor. This chain is Extracellular metalloproteinase 3 (MEP3), found in Arthroderma benhamiae (Trichophyton mentagrophytes).